The following is a 255-amino-acid chain: Hydroxyacylglutathione hydrolase (255 aa).

Zn(2+)-binding residues include His-56, His-58, Asp-60, His-61, His-114, Asp-133, and His-171.

Belongs to the metallo-beta-lactamase superfamily. Glyoxalase II family. In terms of assembly, monomer. The cofactor is Zn(2+).

The catalysed reaction is an S-(2-hydroxyacyl)glutathione + H2O = a 2-hydroxy carboxylate + glutathione + H(+). Its pathway is secondary metabolite metabolism; methylglyoxal degradation; (R)-lactate from methylglyoxal: step 2/2. In terms of biological role, thiolesterase that catalyzes the hydrolysis of S-D-lactoyl-glutathione to form glutathione and D-lactic acid. This Rhodopseudomonas palustris (strain BisA53) protein is Hydroxyacylglutathione hydrolase.